We begin with the raw amino-acid sequence, 333 residues long: Holliday junction branch migration complex subunit RuvB (333 aa).

The large ATPase domain (RuvB-L) stretch occupies residues 1 to 182; sequence MDERLLSGES…FGVLSRLEYY (182 aa). ATP-binding positions include Leu-21, Arg-22, Gly-63, Lys-66, Thr-67, Thr-68, 129 to 131, Arg-172, Tyr-182, and Arg-219; that span reads EDF. Thr-67 is a Mg(2+) binding site. Residues 183 to 253 form a small ATPAse domain (RuvB-S) region; it reads TVDQLSAIVE…ITQMALELLQ (71 aa). A head domain (RuvB-H) region spans residues 256 to 333; sequence KLGLDHIDHK…QHFGMEMPKI (78 aa). The DNA site is built by Arg-311 and Arg-316.

This sequence belongs to the RuvB family. Homohexamer. Forms an RuvA(8)-RuvB(12)-Holliday junction (HJ) complex. HJ DNA is sandwiched between 2 RuvA tetramers; dsDNA enters through RuvA and exits via RuvB. An RuvB hexamer assembles on each DNA strand where it exits the tetramer. Each RuvB hexamer is contacted by two RuvA subunits (via domain III) on 2 adjacent RuvB subunits; this complex drives branch migration. In the full resolvosome a probable DNA-RuvA(4)-RuvB(12)-RuvC(2) complex forms which resolves the HJ.

It localises to the cytoplasm. The catalysed reaction is ATP + H2O = ADP + phosphate + H(+). Functionally, the RuvA-RuvB-RuvC complex processes Holliday junction (HJ) DNA during genetic recombination and DNA repair, while the RuvA-RuvB complex plays an important role in the rescue of blocked DNA replication forks via replication fork reversal (RFR). RuvA specifically binds to HJ cruciform DNA, conferring on it an open structure. The RuvB hexamer acts as an ATP-dependent pump, pulling dsDNA into and through the RuvAB complex. RuvB forms 2 homohexamers on either side of HJ DNA bound by 1 or 2 RuvA tetramers; 4 subunits per hexamer contact DNA at a time. Coordinated motions by a converter formed by DNA-disengaged RuvB subunits stimulates ATP hydrolysis and nucleotide exchange. Immobilization of the converter enables RuvB to convert the ATP-contained energy into a lever motion, pulling 2 nucleotides of DNA out of the RuvA tetramer per ATP hydrolyzed, thus driving DNA branch migration. The RuvB motors rotate together with the DNA substrate, which together with the progressing nucleotide cycle form the mechanistic basis for DNA recombination by continuous HJ branch migration. Branch migration allows RuvC to scan DNA until it finds its consensus sequence, where it cleaves and resolves cruciform DNA. This is Holliday junction branch migration complex subunit RuvB from Bacillus cytotoxicus (strain DSM 22905 / CIP 110041 / 391-98 / NVH 391-98).